The following is a 185-amino-acid chain: Probable nicotinate-nucleotide adenylyltransferase (185 aa).

It belongs to the NadD family.

The enzyme catalyses nicotinate beta-D-ribonucleotide + ATP + H(+) = deamido-NAD(+) + diphosphate. The protein operates within cofactor biosynthesis; NAD(+) biosynthesis; deamido-NAD(+) from nicotinate D-ribonucleotide: step 1/1. In terms of biological role, catalyzes the reversible adenylation of nicotinate mononucleotide (NaMN) to nicotinic acid adenine dinucleotide (NaAD). This is Probable nicotinate-nucleotide adenylyltransferase from Methylorubrum extorquens (strain CM4 / NCIMB 13688) (Methylobacterium extorquens).